The following is a 285-amino-acid chain: Eukaryotic translation initiation factor 3 subunit F-2 (285 aa).

Positions 11 to 145 constitute an MPN domain; that stretch reads VFLKPLVLFQ…TRLYCAVEMG (135 aa).

It belongs to the eIF-3 subunit F family. Component of the eukaryotic translation initiation factor 3 (eIF-3) complex. The eIF-3 complex interacts with pix.

The protein resides in the cytoplasm. Component of the eukaryotic translation initiation factor 3 (eIF-3) complex, which is involved in protein synthesis of a specialized repertoire of mRNAs and, together with other initiation factors, stimulates binding of mRNA and methionyl-tRNAi to the 40S ribosome. The eIF-3 complex specifically targets and initiates translation of a subset of mRNAs involved in cell proliferation. The polypeptide is Eukaryotic translation initiation factor 3 subunit F-2 (Drosophila sechellia (Fruit fly)).